A 560-amino-acid polypeptide reads, in one-letter code: MNNNIINLIAAIILSLSIIFGWQYFVVKPEQKKQQQQIAVQKAENLKKQQLKALVEPATGIVVQEESQVQRIKIESESLTGSISLKGLRFDDLILKKYKQDLSKNSSEVRLFSPANTENAYFAEVGLVSNLSSVKLPNNDTIWNSDSEILSPEKPVHLFWVNEDGVKFLVTITVDENYLFTIEQTIVNNSDKELPVQSYGLINRKYIAVEKAVNILHQGPIGCIDENLKEYSYDDIKDKKSEKFAASKVDWIGITDKYWLSSLIPDKSSNYSSNFNYALKQGIERYQVDFISPVQIIKPGKNFSIKSRIFAGAKKVDLLDKYEKQYDIKLFDRAIDFGWFYIITKPVFYAMNFFYGYVGNFGVSILIVTVIIKLLMFTLANKSYRSMKKMKNLQPEIDRIKNLYSDDKARLNQEIMALYKKEKVNPVAGCLPILVQIPVFFSIYKVLYVTIEMRQAPFYGWIKDLSAPDPTTIFNLFGLLPFAPPSFLMIGAWPILMAITMFLQQKMSPEPADPMQAQVMKFMPLIFLFMFSSFPVGLLIYWSWNNILSIIQQYYINKFN.

The next 6 membrane-spanning stretches (helical) occupy residues 5–25, 334–354, 357–377, 431–451, 476–496, and 522–542; these read IINLIAAIILSLSIIFGWQYF, AIDFGWFYIITKPVFYAMNFF, YVGNFGVSILIVTVIIKLLMF, LPILVQIPVFFSIYKVLYVTI, LFGLLPFAPPSFLMIGAWPIL, and FMPLIFLFMFSSFPVGLLIYW.

It belongs to the OXA1/ALB3/YidC family. Type 1 subfamily. In terms of assembly, interacts with the Sec translocase complex via SecD. Specifically interacts with transmembrane segments of nascent integral membrane proteins during membrane integration.

Its subcellular location is the cell inner membrane. In terms of biological role, required for the insertion and/or proper folding and/or complex formation of integral membrane proteins into the membrane. Involved in integration of membrane proteins that insert both dependently and independently of the Sec translocase complex, as well as at least some lipoproteins. Aids folding of multispanning membrane proteins. This is Membrane protein insertase YidC from Rickettsia rickettsii (strain Iowa).